A 59-amino-acid polypeptide reads, in one-letter code: Large ribosomal subunit protein uL30 (59 aa).

It belongs to the universal ribosomal protein uL30 family. Part of the 50S ribosomal subunit.

In Citrifermentans bemidjiense (strain ATCC BAA-1014 / DSM 16622 / JCM 12645 / Bem) (Geobacter bemidjiensis), this protein is Large ribosomal subunit protein uL30.